The sequence spans 263 residues: MMPKHCFLGFLISFFLTGVAGTQSTHESLKPQRVQFQSRNFHNILQWQPGRALTGNSSVYFVQYKIMFSCSMKSSHQKPSGCWQHISCNFPGCRTLAKYGQRQWKNKEDCWGTQELSCDLTSETSDIQEPYYGRVRAASAGSYSEWSMTPRFTPWWETKIDPPVMNITQVNGSLLVILHAPNLPYRYQKEKNVSIEDYYELLYRVFIINNSLEKEQKVYEGAHRAVEIEALTPHSSYCVVAEIYQPMLDRRSQRSEERCVEIP.

Positions 1–21 (MMPKHCFLGFLISFFLTGVAG) are cleaved as a signal peptide. Fibronectin type-III domains lie at 26 to 68 (HESL…KIMF), 100 to 161 (GQRQ…TKID), and 162 to 263 (PPVM…VEIP). Residue N56 is glycosylated (N-linked (GlcNAc...) asparagine). An intrachain disulfide couples C110 to C118. N166, N171, N192, and N209 each carry an N-linked (GlcNAc...) asparagine glycan. The cysteines at positions 238 and 259 are disulfide-linked.

Belongs to the type II cytokine receptor family. Expressed in placenta, spleen, breast, skin and lung. Also detected in intestinal tract, testis, brain, heart and thymus. No expression found in prostate, bladder, kidney, ovary, muscle, bone marrow, liver and uterus. Isoform 1 is expressed only in placenta. Isoform 2 is expressed in placenta and breast and at lower level in spleen, skin, thymus and stomach.

It localises to the secreted. Functionally, isoform 2 is a receptor for IL22. Binds to IL22, prevents interaction with the functional IL-22R complex and blocks the activity of IL22 (in vitro). May play an important role as an IL22 antagonist in the regulation of inflammatory responses. Isoform 1 may play a role in establishing and maintaining successful pregnancy. The protein is Interleukin-22 receptor subunit alpha-2 (IL22RA2) of Homo sapiens (Human).